Here is a 208-residue protein sequence, read N- to C-terminus: V-type ATP synthase subunit E (208 aa).

The protein belongs to the V-ATPase E subunit family.

Produces ATP from ADP in the presence of a proton gradient across the membrane. The polypeptide is V-type ATP synthase subunit E (Chlamydia felis (strain Fe/C-56) (Chlamydophila felis)).